The chain runs to 466 residues: Uronate isomerase (466 aa).

Belongs to the metallo-dependent hydrolases superfamily. Uronate isomerase family.

It carries out the reaction D-glucuronate = D-fructuronate. The catalysed reaction is aldehydo-D-galacturonate = keto-D-tagaturonate. Its pathway is carbohydrate metabolism; pentose and glucuronate interconversion. This chain is Uronate isomerase, found in Lachnoclostridium phytofermentans (strain ATCC 700394 / DSM 18823 / ISDg) (Clostridium phytofermentans).